Consider the following 149-residue polypeptide: Large ribosomal subunit protein bL9 (149 aa).

It belongs to the bacterial ribosomal protein bL9 family.

In terms of biological role, binds to the 23S rRNA. The protein is Large ribosomal subunit protein bL9 of Helicobacter pylori (strain G27).